The following is a 609-amino-acid chain: Phosphoenolpyruvate carboxykinase [GTP] (609 aa).

Substrate contacts are provided by residues Arg81 and Tyr220 to Gly222. Mn(2+) contacts are provided by Lys229 and His249. Ser271 serves as a coordination point for substrate. Ala272–Asn277 lines the GTP pocket. Residue Cys273 is part of the active site. Mn(2+) is bound at residue Asp296. Asn387 to Arg389 contacts substrate. Residues Arg389, Arg420, and Phe515–Asn518 each bind GTP.

The protein belongs to the phosphoenolpyruvate carboxykinase [GTP] family. As to quaternary structure, monomer. It depends on Mn(2+) as a cofactor.

It localises to the cytoplasm. It catalyses the reaction oxaloacetate + GTP = phosphoenolpyruvate + GDP + CO2. Its pathway is carbohydrate biosynthesis; gluconeogenesis. In terms of biological role, catalyzes the conversion of oxaloacetate (OAA) to phosphoenolpyruvate (PEP), the rate-limiting step in the metabolic pathway that produces glucose from lactate and other precursors derived from the citric acid cycle. This chain is Phosphoenolpyruvate carboxykinase [GTP], found in Mycobacterium leprae (strain Br4923).